The primary structure comprises 1099 residues: MSLNNSSNVFLDSVPSNTNRFQVSVINENHESSAAADDNTDPPHYEETSFGDEAQKRLRISFRPGNQECYDNFLQSGETAKTDASFHAYDSHTNTYYLQTFGHNTMDAVPKIEYYRNTGSISGPKVNRPSLLEIHEQLAKNVAVTPSSADRVANGDGIPGDEQAENKEDDQAGVVKFGWVKGVLVRCMLNIWGVMLFIRLSWIVGEAGIGLGVLIILLSTMVTSITGLSTSAIATNGFVRGGGAYYLISRSLGPEFGGSIGLIFAFANAVAVAMYVVGFAETVVDLLKESDSMMVDPTNDIRIIGSITVVILLGISVAGMEWEAKAQVILLVILLIAIANFFIGTVIPSNNEKKSRGFFNYQASIFAENFGPRFTKGEGFFSVFAIFFPAATGILAGANISGDLEDPQDAIPRGTMLAIFITTVAYLGVAICVGACVVRDATGNMNDTIISGMNCNGSAACGLGYDFSRCRHEPCQYGLMNNFQVMSMVSGFGPLITAGIFSATLSSALASLVSAPKVFQALCKDNIYKALQFFAKGYGKNNEPLRGYILTFLIAMAFILIAELNTIAPIISNFFLASYALINFSCFHASYAKSPGWRPAYGIYNMWVSLFGAVLCCAVMFVINWWAAVITYVIEFFLYVYVTCKKPDVNWGSSTQALSYVSALDNALELTTVEDHVKNFRPQCIVLTGGPMTRPALLDITHAFTKNSGLCICCEVFVGPRKLCVKEMNSGMAKKQAWLIKNKIKAFYAAVAADCFRDGVRSLLQASGLGRMKPNTLVIGYKKNWRKAPLTEIENYVGIIHDAFDFEIGVVIVRISQGFDISQVLQVQEELERLEQERLALEATIKDNECEEESGGIRGLFKKAGKLNITKTTPKKDGSINTSQSMHVGEFNQKLVEASTQFKKKQEKGTIDVWWLFDDGGLTLLIPYILTLRKKWKDCKLRIYVGGKINRIEEEKIVMASLLSKFRIKFADIHIIGDINIRPNKESWKVFEEMIEPYRLHESCKDLTTAEKLKRETPWKITDAELEAVKEKSYRQVRLNELLQEHSRAANLIVLSLPVARKGSISDLLYMAWLEILTKNLPPVLLVRGNHKNVLTFYS.

Residues Met1 to Phe177 lie on the Cytoplasmic side of the membrane. Residues Arg20–Val23 carry the RFXV motif motif. Residues Glu31 to Glu53 form a disordered region. The residue at position 61 (Ser61) is a Phosphoserine. Ser91 bears the Phosphoserine; by OXSR1 and STK39 mark. Position 95 is a phosphothreonine (Thr95). Thr100 and Thr105 each carry phosphothreonine; by OXSR1 and STK39. Thr118 carries the post-translational modification Phosphothreonine. The residue at position 120 (Ser120) is a Phosphoserine. A Phosphoserine; by AMPK modification is found at Ser130. Ser148 is subject to Phosphoserine. Residues Gly178–Ile198 traverse the membrane as a helical segment. Topologically, residues Arg199 to Ser201 are extracellular. A helical transmembrane segment spans residues Trp202–Val222. Over Thr223 to Ser259 the chain is Cytoplasmic. The helical transmembrane segment at Ile260–Ala280 threads the bilayer. Residues Glu281–Arg302 lie on the Extracellular side of the membrane. The chain crosses the membrane as a helical span at residues Ile303 to Glu323. Over Ala324–Gln327 the chain is Cytoplasmic. The helical transmembrane segment at Val328–Pro348 threads the bilayer. Residues Ser349 to Gly379 are Extracellular-facing. Residues Phe380–Ile400 form a helical membrane-spanning segment. The Cytoplasmic portion of the chain corresponds to Ser401–Leu417. The helical transmembrane segment at Ala418 to Val438 threads the bilayer. Residues Arg439–Leu550 lie on the Extracellular side of the membrane. Residues Asn446 and Asn456 are each glycosylated (N-linked (GlcNAc...) asparagine). The next 2 membrane-spanning stretches (helical) occupy residues Thr551–Ile571 and Ser572–Ala592. Over Lys593–Ser609 the chain is Extracellular. Residues Leu610 to Ile630 traverse the membrane as a helical segment. Residues Thr631–Ser1099 lie on the Cytoplasmic side of the membrane.

It belongs to the SLC12A transporter family. When phosphorylated, interacts with PPP3CB. Phosphorylated at Ser-91, Thr-100 and Thr-105 by OXSR1/OSR1 and STK39/SPAK downstream of WNK kinases (WNK1, WNK2, WNK3 or WNK4), promoting its activity. In terms of tissue distribution, kidney; localizes to the thick ascending limbs (at protein level).

It localises to the apical cell membrane. The catalysed reaction is K(+)(out) + 2 chloride(out) + Na(+)(out) = K(+)(in) + 2 chloride(in) + Na(+)(in). With respect to regulation, activated following phosphorylation by OXSR1/OSR1 and STK39/SPAK downstream of WNK kinases (WNK1, WNK2, WNK3 or WNK4). In terms of biological role, renal sodium, potassium and chloride ion cotransporter that mediates the transepithelial NaCl reabsorption in the thick ascending limb and plays an essential role in the urinary concentration and volume regulation. Electrically silent transporter system. The polypeptide is Solute carrier family 12 member 1 (SLC12A1) (Homo sapiens (Human)).